A 444-amino-acid polypeptide reads, in one-letter code: Trigger factor (444 aa).

One can recognise a PPIase FKBP-type domain in the interval 161–246; that stretch reads GDRVVIDFKG…VQKVEGQKLP (86 aa).

The protein belongs to the FKBP-type PPIase family. Tig subfamily.

The protein resides in the cytoplasm. It catalyses the reaction [protein]-peptidylproline (omega=180) = [protein]-peptidylproline (omega=0). Its function is as follows. Involved in protein export. Acts as a chaperone by maintaining the newly synthesized protein in an open conformation. Functions as a peptidyl-prolyl cis-trans isomerase. The protein is Trigger factor of Saccharophagus degradans (strain 2-40 / ATCC 43961 / DSM 17024).